Here is a 426-residue protein sequence, read N- to C-terminus: Histone deacetylase 9 (426 aa).

The segment at 6–318 (KISYFYDGDV…WTVETGILLD (313 aa)) is histone deacetylase. The active-site Proton donor/acceptor is H137. 3 residues coordinate Zn(2+): D172, H174, and D261. Residues 383 to 426 (PDFYIPDFDEDEQNPDVRADQRSRDKQIQRDDEYFDGDNDNDAS) are disordered. Residues 397 to 414 (PDVRADQRSRDKQIQRDD) show a composition bias toward basic and acidic residues. The segment covering 415-426 (EYFDGDNDNDAS) has biased composition (acidic residues).

It belongs to the histone deacetylase family. HD type 1 subfamily. Interacts with AHL22. Binds to farnesylated ASG2 in the cytosol. It depends on Zn(2+) as a cofactor.

The protein localises to the nucleus. It localises to the cytoplasm. It is found in the cytosol. It carries out the reaction N(6)-acetyl-L-lysyl-[histone] + H2O = L-lysyl-[histone] + acetate. Functionally, responsible for the deacetylation of lysine residues on the N-terminal part of the core histones (H2A, H2B, H3 and H4). Histone deacetylation gives a tag for epigenetic repression and plays an important role in transcriptional regulation, cell cycle progression and developmental events. Histone deacetylases act via the formation of large multiprotein complexes. The protein is Histone deacetylase 9 (HDA9) of Arabidopsis thaliana (Mouse-ear cress).